A 382-amino-acid chain; its full sequence is Protein delta homolog 2 (382 aa).

A signal peptide spans 1–26; it reads MPSGCRCLNLVCLLCILGATSQPARA. EGF-like domains follow at residues 27 to 58, 62 to 89, 91 to 129, and 131 to 172; these read DDCSSHCDLAHGCCAPDGSCRCDPGWEGLHCE, RMPGCQHGTCHQPWQCICHSGWAGKFCD, DEHICTSQSPCQNGGQCVYDGGGEYHCVCLPGFRGRGCE, and KAGP…AHCE. Over 27-305 the chain is Extracellular; that stretch reads DDCSSHCDLA…RQEAGLGESS (279 aa). 17 cysteine pairs are disulfide-bonded: Cys-29–Cys-40, Cys-33–Cys-46, Cys-48–Cys-57, Cys-66–Cys-71, Cys-79–Cys-88, Cys-95–Cys-107, Cys-101–Cys-117, Cys-119–Cys-128, Cys-135–Cys-148, Cys-142–Cys-160, Cys-162–Cys-171, Cys-178–Cys-189, Cys-183–Cys-198, Cys-200–Cys-209, Cys-216–Cys-227, Cys-221–Cys-236, and Cys-238–Cys-247. Asn-157 carries an N-linked (GlcNAc...) asparagine glycan. Residues 174 to 210 enclose the EGF-like 5; calcium-binding domain; sequence NVDDCLMRPCANGATCIDGINRFSCLCPEGFAGRFCT. The EGF-like 6; calcium-binding domain maps to 212 to 248; sequence NLDDCASRPCQRGARCRDRVHDFDCLCPSGYGGKTCE. The helical transmembrane segment at 306-326 threads the bilayer; it reads LVALVVFGSLTAALVLATVLL. Residues 327–382 lie on the Cytoplasmic side of the membrane; the sequence is TLRAWRRGICPTGPCCDPAPHYAPARQDQECQVSMLPAGFPLSPDLPPEPGKTTAL.

It is found in the membrane. Functionally, regulates adipogenesis. The chain is Protein delta homolog 2 (Dlk2) from Rattus norvegicus (Rat).